The chain runs to 258 residues: Lipoprotein-releasing system ATP-binding protein LolD (258 aa).

Residues 5 to 244 (LQCCQLSKSY…PTSSITDPAN (240 aa)) form the ABC transporter domain. 41–48 (GSSGCGKS) lines the ATP pocket. The tract at residues 222–258 (LRPLSDNSEQALPPTSSITDPANNIKDNEPQANERHV) is disordered. Residues 226-243 (SDNSEQALPPTSSITDPA) are compositionally biased toward polar residues. A compositionally biased stretch (basic and acidic residues) spans 247–258 (KDNEPQANERHV).

It belongs to the ABC transporter superfamily. Lipoprotein translocase (TC 3.A.1.125) family. In terms of assembly, the complex is composed of two ATP-binding proteins (LolD) and two transmembrane proteins (LolC and LolE).

It localises to the cell inner membrane. Its function is as follows. Part of the ABC transporter complex LolCDE involved in the translocation of mature outer membrane-directed lipoproteins, from the inner membrane to the periplasmic chaperone, LolA. Responsible for the formation of the LolA-lipoprotein complex in an ATP-dependent manner. The sequence is that of Lipoprotein-releasing system ATP-binding protein LolD from Colwellia psychrerythraea (strain 34H / ATCC BAA-681) (Vibrio psychroerythus).